We begin with the raw amino-acid sequence, 78 residues long: Exodeoxyribonuclease 7 small subunit (78 aa).

Belongs to the XseB family. As to quaternary structure, heterooligomer composed of large and small subunits.

Its subcellular location is the cytoplasm. The catalysed reaction is Exonucleolytic cleavage in either 5'- to 3'- or 3'- to 5'-direction to yield nucleoside 5'-phosphates.. In terms of biological role, bidirectionally degrades single-stranded DNA into large acid-insoluble oligonucleotides, which are then degraded further into small acid-soluble oligonucleotides. The polypeptide is Exodeoxyribonuclease 7 small subunit (Synechococcus sp. (strain JA-2-3B'a(2-13)) (Cyanobacteria bacterium Yellowstone B-Prime)).